The primary structure comprises 392 residues: Putative glutamate--cysteine ligase 2 (392 aa).

Positions 1–21 (MMPVSGWRAVSSAPASSSAGR) are disordered. Positions 9 to 19 (AVSSAPASSSA) are enriched in low complexity.

It belongs to the glutamate--cysteine ligase type 2 family. YbdK subfamily.

The catalysed reaction is L-cysteine + L-glutamate + ATP = gamma-L-glutamyl-L-cysteine + ADP + phosphate + H(+). Its function is as follows. ATP-dependent carboxylate-amine ligase which exhibits weak glutamate--cysteine ligase activity. The polypeptide is Putative glutamate--cysteine ligase 2 (Mycobacterium ulcerans (strain Agy99)).